A 497-amino-acid polypeptide reads, in one-letter code: Carboxypeptidase Y homolog ARB_02032 (497 aa).

An N-terminal signal peptide occupies residues 1 to 18 (MRFTQIVAAALCLGATEA). Asn-88 carries an N-linked (GlcNAc...) asparagine glycan. Residue Ser-204 is part of the active site. N-linked (GlcNAc...) asparagine glycans are attached at residues Asn-263 and Asn-393. Residue Asp-403 is part of the active site. The N-linked (GlcNAc...) asparagine glycan is linked to Asn-417. Residue His-469 is part of the active site.

It belongs to the peptidase S10 family.

The protein resides in the secreted. The enzyme catalyses Release of a C-terminal amino acid with broad specificity.. In terms of biological role, involved in degradation of small peptides. This is Carboxypeptidase Y homolog ARB_02032 from Arthroderma benhamiae (strain ATCC MYA-4681 / CBS 112371) (Trichophyton mentagrophytes).